The primary structure comprises 133 residues: Urease subunit beta (133 aa).

The tract at residues 106–133 is disordered; that stretch reads VFRPNDSNQNAAVKNDAGEDNANKKGGK.

This sequence belongs to the urease beta subunit family. As to quaternary structure, heterotrimer of UreA (gamma), UreB (beta) and UreC (alpha) subunits. Three heterotrimers associate to form the active enzyme.

It is found in the cytoplasm. The catalysed reaction is urea + 2 H2O + H(+) = hydrogencarbonate + 2 NH4(+). It functions in the pathway nitrogen metabolism; urea degradation; CO(2) and NH(3) from urea (urease route): step 1/1. The protein is Urease subunit beta of Staphylococcus epidermidis (strain ATCC 12228 / FDA PCI 1200).